The primary structure comprises 3133 residues: Hemocytin (3133 aa).

The TIL 1 domain maps to 40-96 (CTGGQQYTVCADSCLRKCSDTALAASGQCKPVCVEGCACSPSQLLDDNGVCVPVAKC). Asn-151 is a glycosylation site (N-linked (GlcNAc...) asparagine). A TIL 2 domain is found at 153–209 (TAQNMEFTTCETSEPLTCKNMHLPPSTQTAECRPGCQCKKGQVLDTASKRCVPATQC). Asn-237 is a glycosylation site (N-linked (GlcNAc...) asparagine). The VWFD 1 domain occupies 247–418 (GVCGAWGDSH…DSWKLKPTCP (172 aa)). 3 disulfide bridges follow: Cys-249-Cys-380, Cys-271-Cys-417, and Cys-295-Cys-302. Residues 509–576 (CDEVCSNYDS…TTECVPRAKC (68 aa)) form the TIL 3 domain. An N-linked (GlcNAc...) asparagine glycan is attached at Asn-564. The interval 661–680 (PDGQSVESEPLPKPNELQIG) is disordered. One can recognise a TIL 4 domain in the interval 770–837 (CPPGEVYQAC…ERTCVPVKDC (68 aa)). The tract at residues 899–924 (STTTTTTTSTTTTTTTPEPTETTTET) is disordered. 2 cysteine pairs are disulfide-bonded: Cys-940–Cys-1095 and Cys-1116–Cys-1254. F5/8 type C domains follow at residues 940 to 1095 (CSPD…IIGC) and 1116 to 1254 (CTEP…PIGC). N-linked (GlcNAc...) asparagine glycans are attached at residues Asn-1170, Asn-1387, Asn-1622, Asn-1727, and Asn-1847. Residues 1619-1794 (VFCNMTGRTF…KPGVPADACA (176 aa)) enclose the VWFD 2 domain. Intrachain disulfides connect Cys-1621–Cys-1754 and Cys-1641–Cys-1793. Residues 1890–1948 (CPPPLVHYDCYRKRCEETCAPYPNAARACPAQEGQCSPGCYCPDGKLRKGDQCVLPADC) form the TIL 5 domain. The region spanning 1951 to 2136 (CTCTGVGTPA…WQASPEKLTE (186 aa)) is the VWFD 3 domain. Cystine bridges form between Cys-1953–Cys-2099 and Cys-2001–Cys-2009. Asn-1975 and Asn-1985 each carry an N-linked (GlcNAc...) asparagine glycan. Residues Asn-2093, Asn-2113, Asn-2161, Asn-2276, and Asn-2451 are each glycosylated (N-linked (GlcNAc...) asparagine). Positions 2229-2285 (CEEPFVYRACVDCERTCDNYEQLQTSPEKCTNKPVEGCFCPEGKVRVNNTCIEPGKC) constitute a TIL 6 domain. The VWFC 1 domain occupies 2553–2622 (VACRHQDNVY…DSGQCCGKCE (70 aa)). Asn-2647, Asn-2654, Asn-2663, Asn-2794, Asn-2810, Asn-2865, Asn-2929, Asn-2964, and Asn-3028 each carry an N-linked (GlcNAc...) asparagine glycan. One can recognise a VWFC 2 domain in the interval 2842–2907 (VACRDGDKIY…AADHCCGRCV (66 aa)). Intrachain disulfides connect Cys-2971-Cys-3040, Cys-2991-Cys-3054, Cys-3004-Cys-3070, and Cys-3020-Cys-3072. Positions 2971-3076 (CNEKPQALSK…PARCHCAACG (106 aa)) constitute a CTCK domain.

May be converted into the 260 kDa mature hemocytin by proteolysis.

Its function is as follows. Adhesive protein and relates to hemostasis or encapsulation of foreign substances for self-defense. This Bombyx mori (Silk moth) protein is Hemocytin.